Reading from the N-terminus, the 149-residue chain is Probable flagellum biosynthesis repressor protein FlbT (149 aa).

This sequence belongs to the FlbT family.

Its function is as follows. Has a post-transcriptional repressor function in flagellum biogenesis. Associates with the 5'-UTR of fljK mRNA and promotes its degradation. The protein is Probable flagellum biosynthesis repressor protein FlbT of Sinorhizobium medicae (strain WSM419) (Ensifer medicae).